The following is a 276-amino-acid chain: Large ribosomal subunit protein uL2 (276 aa).

Disordered stretches follow at residues 35 to 58 (RKLS…GGGH) and 218 to 276 (RPIT…KNRK). Residues 255 to 276 (RRPKKASNKMIVRRRPNGKNRK) show a composition bias toward basic residues.

The protein belongs to the universal ribosomal protein uL2 family. In terms of assembly, part of the 50S ribosomal subunit. Forms a bridge to the 30S subunit in the 70S ribosome.

One of the primary rRNA binding proteins. Required for association of the 30S and 50S subunits to form the 70S ribosome, for tRNA binding and peptide bond formation. It has been suggested to have peptidyltransferase activity; this is somewhat controversial. Makes several contacts with the 16S rRNA in the 70S ribosome. The sequence is that of Large ribosomal subunit protein uL2 from Bifidobacterium adolescentis (strain ATCC 15703 / DSM 20083 / NCTC 11814 / E194a).